Reading from the N-terminus, the 762-residue chain is Xaa-Pro dipeptidyl-peptidase (762 aa).

Active-site charge relay system residues include Ser349, Asp469, and His499.

Belongs to the peptidase S15 family. As to quaternary structure, homodimer.

It localises to the cytoplasm. It carries out the reaction Hydrolyzes Xaa-Pro-|- bonds to release unblocked, N-terminal dipeptides from substrates including Ala-Pro-|-p-nitroanilide and (sequentially) Tyr-Pro-|-Phe-Pro-|-Gly-Pro-|-Ile.. Its function is as follows. Removes N-terminal dipeptides sequentially from polypeptides having unsubstituted N-termini provided that the penultimate residue is proline. This is Xaa-Pro dipeptidyl-peptidase from Streptococcus sanguinis (strain SK36).